Here is a 572-residue protein sequence, read N- to C-terminus: Proline--tRNA ligase (572 aa).

It belongs to the class-II aminoacyl-tRNA synthetase family. ProS type 1 subfamily. Homodimer.

Its subcellular location is the cytoplasm. The catalysed reaction is tRNA(Pro) + L-proline + ATP = L-prolyl-tRNA(Pro) + AMP + diphosphate. Catalyzes the attachment of proline to tRNA(Pro) in a two-step reaction: proline is first activated by ATP to form Pro-AMP and then transferred to the acceptor end of tRNA(Pro). As ProRS can inadvertently accommodate and process non-cognate amino acids such as alanine and cysteine, to avoid such errors it has two additional distinct editing activities against alanine. One activity is designated as 'pretransfer' editing and involves the tRNA(Pro)-independent hydrolysis of activated Ala-AMP. The other activity is designated 'posttransfer' editing and involves deacylation of mischarged Ala-tRNA(Pro). The misacylated Cys-tRNA(Pro) is not edited by ProRS. The protein is Proline--tRNA ligase of Buchnera aphidicola subsp. Acyrthosiphon pisum (strain 5A).